An 867-amino-acid chain; its full sequence is Glucans biosynthesis glucosyltransferase H (867 aa).

Residues 71–91 (DDEGRTQLETMPKATRSSISP) are disordered. Helical transmembrane passes span 139-156 (YILL…TWYM), 194-216 (ILIL…LMGF), 518-540 (VMSY…LQVV), 568-590 (IALL…LLIW), 603-625 (VTIS…MLFH), and 680-702 (FLFW…VFSS).

Belongs to the glycosyltransferase 2 family. OpgH subfamily.

The protein resides in the cell inner membrane. Its pathway is glycan metabolism; osmoregulated periplasmic glucan (OPG) biosynthesis. Involved in the biosynthesis of osmoregulated periplasmic glucans (OPGs). The chain is Glucans biosynthesis glucosyltransferase H from Nitrosomonas europaea (strain ATCC 19718 / CIP 103999 / KCTC 2705 / NBRC 14298).